Consider the following 253-residue polypeptide: Sortase SrtE2 (253 aa).

Residues 1-11 (MAATTDTEHQE) are compositionally biased toward basic and acidic residues. The disordered stretch occupies residues 1 to 23 (MAATTDTEHQEQAGTGGRGRRRP). Residues 30-50 (AVSVLGELLITAGLVMGLFVV) form a helical membrane-spanning segment. The interval 69-89 (EKVRDDWAQDRVGGSGQDGPG) is disordered. Residue Cys220 is part of the active site.

It belongs to the bacterial sortase family. Class E subfamily.

Its subcellular location is the cell membrane. The catalysed reaction is The enzyme catalyzes a cell wall sorting reaction in which a surface protein with a sorting signal containing a LPXTG motif is cleaved between the Thr and Gly residue. The resulting threonine carboxyl end of the protein is covalently attached to a pentaglycine cross-bridge of peptidoglycan.. Transpeptidase that anchors surface proteins to the cell wall. Recognizes Leu-Ala-x-Thr-Gly and Leu-Pro-x-Thr-Gly, with a preference for the former. Unlike the S.aureus sortase it cleaves not only the Thr-Gly motif but also the Ala-X bond; an Ala-Glu bond is a better substrate than the Thr-Gly motif in vitro. Among its possible substrates are the chaplins ChpA, ChpB and ChpC; this enzyme is more important for ChpC attachment than is SrtE1. A double knockout mutant of srtE1 and srtE2 shows a developmental defect in aerial hyphae formation more dramatic than that due to chaplin deletion. In Streptomyces coelicolor (strain ATCC BAA-471 / A3(2) / M145), this protein is Sortase SrtE2.